Reading from the N-terminus, the 373-residue chain is Probable tRNA sulfurtransferase (373 aa).

One can recognise a THUMP domain in the interval 54 to 158; that stretch reads NKNIEELSKV…NDVAYFYHKI (105 aa). ATP contacts are provided by residues 176–177, 201–202, Lys-256, Gly-278, and Gln-287; these read LF and NF.

The protein belongs to the ThiI family.

The protein localises to the cytoplasm. The enzyme catalyses [ThiI sulfur-carrier protein]-S-sulfanyl-L-cysteine + a uridine in tRNA + 2 reduced [2Fe-2S]-[ferredoxin] + ATP + H(+) = [ThiI sulfur-carrier protein]-L-cysteine + a 4-thiouridine in tRNA + 2 oxidized [2Fe-2S]-[ferredoxin] + AMP + diphosphate. The catalysed reaction is [ThiS sulfur-carrier protein]-C-terminal Gly-Gly-AMP + S-sulfanyl-L-cysteinyl-[cysteine desulfurase] + AH2 = [ThiS sulfur-carrier protein]-C-terminal-Gly-aminoethanethioate + L-cysteinyl-[cysteine desulfurase] + A + AMP + 2 H(+). It participates in cofactor biosynthesis; thiamine diphosphate biosynthesis. Its function is as follows. Catalyzes the ATP-dependent transfer of a sulfur to tRNA to produce 4-thiouridine in position 8 of tRNAs, which functions as a near-UV photosensor. Also catalyzes the transfer of sulfur to the sulfur carrier protein ThiS, forming ThiS-thiocarboxylate. This is a step in the synthesis of thiazole, in the thiamine biosynthesis pathway. The sulfur is donated as persulfide by IscS. This is Probable tRNA sulfurtransferase from Saccharolobus islandicus (strain M.16.27) (Sulfolobus islandicus).